The following is a 383-amino-acid chain: Protein arginine N-methyltransferase PRMT10 (383 aa).

The interval 1 to 23 is disordered; it reads MRSSQNGGAMGGRAAGTGGGGPS. Residues 8 to 22 are compositionally biased toward gly residues; sequence GAMGGRAAGTGGGGP. Residues 29–360 form the SAM-dependent MTase PRMT-type domain; sequence EVDYAQYFCT…KENHRLMEIE (332 aa). Glutamine 45, arginine 54, glycine 78, glutamate 100, and glutamate 129 together coordinate S-adenosyl-L-methionine. Residues glutamate 143 and glutamate 152 contribute to the active site. The segment at 190–230 is dimerization arm; sequence DRKRNDFDGAMADWHNFSDEIKSYYGVDMGVLTKPFAEEQE.

Belongs to the class I-like SAM-binding methyltransferase superfamily. Protein arginine N-methyltransferase family. As to quaternary structure, ring-like homodimer.

The enzyme catalyses L-arginyl-[protein] + 2 S-adenosyl-L-methionine = N(omega),N(omega)-dimethyl-L-arginyl-[protein] + 2 S-adenosyl-L-homocysteine + 2 H(+). In terms of biological role, methylates (mono and asymmetric dimethylation) the guanidino nitrogens of arginyl residues in some proteins. Essential for regulating flowering time. The chain is Protein arginine N-methyltransferase PRMT10 (PRMT10) from Arabidopsis thaliana (Mouse-ear cress).